The following is a 356-amino-acid chain: Guanine nucleotide-binding protein alpha-2 subunit (356 aa).

Residue Gly-2 is the site of N-myristoyl glycine attachment. A lipid anchor (S-palmitoyl cysteine) is attached at Cys-4. Positions 32–356 (RTVKLLLLGA…QSNLHKSGLY (325 aa)) constitute a G-alpha domain. A G1 motif region spans residues 35–48 (KLLLLGAGECGKST). GTP is bound by residues Glu-43, Gly-45, Lys-46, Ser-47, Thr-48, Asp-153, Leu-178, Thr-184, Gly-206, Asn-272, Lys-273, Asp-275, and Ala-328. Ser-47 serves as a coordination point for Mg(2+). Residues 176–184 (DTLLLRTKT) are G2 motif. Residue Thr-184 participates in Mg(2+) binding. The interval 199–208 (FRVFDVGGQR) is G3 motif. Residues 268–275 (ILFLNKKD) form a G4 motif region. Residues 326–331 (TCATDT) are G5 motif.

The protein belongs to the G-alpha family. G(q) subfamily. As to quaternary structure, g proteins are composed of 3 units; alpha, beta and gamma. The alpha chain contains the guanine nucleotide binding site. It depends on Mg(2+) as a cofactor.

Its function is as follows. Guanine nucleotide-binding proteins (G proteins) are involved as modulators or transducers in various transmembrane signaling systems. Involved in behavioral responses to P.aeruginosa by controlling the expression of daf-7, a member of the TGF-beta family, in ASJ sensory neurons. The sequence is that of Guanine nucleotide-binding protein alpha-2 subunit (gpa-2) from Caenorhabditis elegans.